A 108-amino-acid chain; its full sequence is ATP synthase peripheral stalk subunit F6, mitochondrial (108 aa).

The N-terminal 32 residues, 1–32 (MVLQRIFRLSSVLRSAVSVHLKRNIGVTAVAF), are a transit peptide targeting the mitochondrion. Residues lysine 41, lysine 46, and lysine 79 each carry the N6-acetyllysine modification. N6-acetyllysine; alternate occurs at positions 84, 94, and 99. Lysine 84, lysine 94, and lysine 99 each carry N6-succinyllysine; alternate. Lysine 105 carries the N6-acetyllysine modification. Serine 108 is modified (phosphoserine).

It belongs to the eukaryotic ATPase subunit F6 family. As to quaternary structure, component of the ATP synthase complex composed at least of ATP5F1A/subunit alpha, ATP5F1B/subunit beta, ATP5MC1/subunit c (homooctomer), MT-ATP6/subunit a, MT-ATP8/subunit 8, ATP5ME/subunit e, ATP5MF/subunit f, ATP5MG/subunit g, ATP5MK/subunit k, ATP5MJ/subunit j, ATP5F1C/subunit gamma, ATP5F1D/subunit delta, ATP5F1E/subunit epsilon, ATP5PF/subunit F6, ATP5PB/subunit b, ATP5PD/subunit d, ATP5PO/subunit OSCP. ATP synthase complex consists of a soluble F(1) head domain (subunits alpha(3) and beta(3)) - the catalytic core - and a membrane F(0) domain - the membrane proton channel (subunits c, a, 8, e, f, g, k and j). These two domains are linked by a central stalk (subunits gamma, delta, and epsilon) rotating inside the F1 region and a stationary peripheral stalk (subunits F6, b, d, and OSCP).

It localises to the mitochondrion. The protein resides in the mitochondrion inner membrane. Its function is as follows. Subunit F6, of the mitochondrial membrane ATP synthase complex (F(1)F(0) ATP synthase or Complex V) that produces ATP from ADP in the presence of a proton gradient across the membrane which is generated by electron transport complexes of the respiratory chain. ATP synthase complex consist of a soluble F(1) head domain - the catalytic core - and a membrane F(1) domain - the membrane proton channel. These two domains are linked by a central stalk rotating inside the F(1) region and a stationary peripheral stalk. During catalysis, ATP synthesis in the catalytic domain of F(1) is coupled via a rotary mechanism of the central stalk subunits to proton translocation. In vivo, can only synthesize ATP although its ATP hydrolase activity can be activated artificially in vitro. Part of the complex F(0) domain. Part of the complex F(0) domain and the peripheric stalk, which acts as a stator to hold the catalytic alpha(3)beta(3) subcomplex and subunit a/ATP6 static relative to the rotary elements. The chain is ATP synthase peripheral stalk subunit F6, mitochondrial from Mus musculus (Mouse).